Consider the following 79-residue polypeptide: Dolichyl-diphosphooligosaccharide--protein glycosyltransferase subunit TMEM258 (79 aa).

Met-1 is modified (N-acetylmethionine). Over 1 to 16 (MELEAMSRYTSPVNPA) the chain is Lumenal. The helical transmembrane segment at 17–37 (VFPHLTVVLLAIGMFFTAWFF) threads the bilayer. At 38 to 54 (VYEVTSTKYTRDICKEL) the chain is on the cytoplasmic side. The chain crosses the membrane as a helical span at residues 55–75 (LISLVASLFMGFGVLFLLLWV). Over 76-79 (GIYV) the chain is Lumenal.

The protein belongs to the OST5 family. As to quaternary structure, component of the oligosaccharyltransferase (OST) complex. OST exists in two different complex forms which contain common core subunits RPN1, RPN2, OST48, OST4, DAD1 and TMEM258, either STT3A or STT3B as catalytic subunits, and form-specific accessory subunits. STT3A complex assembly occurs through the formation of 3 subcomplexes. Subcomplex 1 contains RPN1 and TMEM258, subcomplex 2 contains the STT3A-specific subunits STT3A, DC2/OSTC, and KCP2 as well as the core subunit OST4, and subcomplex 3 contains RPN2, DAD1, and OST48. The STT3A complex can form stable complexes with the Sec61 complex or with both the Sec61 and TRAP complexes.

The protein localises to the membrane. The protein resides in the endoplasmic reticulum. It localises to the cytoplasm. It functions in the pathway protein modification; protein glycosylation. Subunit of the oligosaccharyl transferase (OST) complex that catalyzes the initial transfer of a defined glycan (Glc(3)Man(9)GlcNAc(2) in eukaryotes) from the lipid carrier dolichol-pyrophosphate to an asparagine residue within an Asn-X-Ser/Thr consensus motif in nascent polypeptide chains, the first step in protein N-glycosylation. N-glycosylation occurs cotranslationally and the complex associates with the Sec61 complex at the channel-forming translocon complex that mediates protein translocation across the endoplasmic reticulum (ER). All subunits are required for a maximal enzyme activity. The chain is Dolichyl-diphosphooligosaccharide--protein glycosyltransferase subunit TMEM258 from Canis lupus familiaris (Dog).